A 1286-amino-acid chain; its full sequence is Ankyrin-repeat and fibronectin type III domain-containing 1 (1286 aa).

ANK repeat units lie at residues 274–303 (QGNE…PEEL) and 311–340 (EGLT…RESP). The 97-residue stretch at 411 to 507 (VPANACLMVS…TTTPVCASPS (97 aa)) folds into the Fibronectin type-III domain. The tract at residues 748 to 755 (GLYLGYLK) is highly conserved peptide sequence. Residues 999–1011 (SSHIDCLPSTSPS) show a composition bias toward polar residues. 4 disordered regions span residues 999–1032 (SSHI…EEGC), 1086–1106 (KASM…DTDH), 1187–1207 (AEDP…RGLP), and 1242–1286 (AGQD…SSML). Residues 1260-1277 (SSLPSSTSSEMSPDPTSP) show a composition bias toward low complexity.

In terms of tissue distribution, expressed in both the suprachiasmatic nucleus and dorsal medial hypothalamus.

In terms of biological role, may play a role in neuronal function. This Mus musculus (Mouse) protein is Ankyrin-repeat and fibronectin type III domain-containing 1.